Consider the following 1465-residue polypeptide: DNA polymerase III PolC-type (1465 aa).

Residues 427–583 form the Exonuclease domain; the sequence is YVVFDVETTG…YDAEATGRLL (157 aa).

This sequence belongs to the DNA polymerase type-C family. PolC subfamily.

It localises to the cytoplasm. The enzyme catalyses DNA(n) + a 2'-deoxyribonucleoside 5'-triphosphate = DNA(n+1) + diphosphate. Functionally, required for replicative DNA synthesis. This DNA polymerase also exhibits 3' to 5' exonuclease activity. This Streptococcus pyogenes serotype M1 protein is DNA polymerase III PolC-type.